The chain runs to 123 residues: Integration host factor subunit alpha (123 aa).

The interval 97-123 (NANGTASSMSSSANAAAGDKSESASGT) is disordered. Low complexity predominate over residues 102–113 (ASSMSSSANAAA).

The protein belongs to the bacterial histone-like protein family. As to quaternary structure, heterodimer of an alpha and a beta chain.

Functionally, this protein is one of the two subunits of integration host factor, a specific DNA-binding protein that functions in genetic recombination as well as in transcriptional and translational control. The protein is Integration host factor subunit alpha of Rhodopseudomonas palustris (strain HaA2).